The chain runs to 388 residues: Succinate--CoA ligase [ADP-forming] subunit beta (388 aa).

In terms of domain architecture, ATP-grasp spans 9-244; it reads KEILRKYNVP…LDEEDANEIE (236 aa). Residues Lys46, 53–55, Glu99, Ala102, and Glu107 contribute to the ATP site; that span reads GRG. Residues Asn199 and Asp213 each coordinate Mg(2+). Residues Asn264 and 321 to 323 each bind substrate; that span reads GIM.

It belongs to the succinate/malate CoA ligase beta subunit family. In terms of assembly, heterotetramer of two alpha and two beta subunits. Mg(2+) is required as a cofactor.

It catalyses the reaction succinate + ATP + CoA = succinyl-CoA + ADP + phosphate. The catalysed reaction is GTP + succinate + CoA = succinyl-CoA + GDP + phosphate. The protein operates within carbohydrate metabolism; tricarboxylic acid cycle; succinate from succinyl-CoA (ligase route): step 1/1. Succinyl-CoA synthetase functions in the citric acid cycle (TCA), coupling the hydrolysis of succinyl-CoA to the synthesis of either ATP or GTP and thus represents the only step of substrate-level phosphorylation in the TCA. The beta subunit provides nucleotide specificity of the enzyme and binds the substrate succinate, while the binding sites for coenzyme A and phosphate are found in the alpha subunit. This is Succinate--CoA ligase [ADP-forming] subunit beta from Cupriavidus taiwanensis (strain DSM 17343 / BCRC 17206 / CCUG 44338 / CIP 107171 / LMG 19424 / R1) (Ralstonia taiwanensis (strain LMG 19424)).